A 143-amino-acid polypeptide reads, in one-letter code: Large ribosomal subunit protein uL11 (143 aa).

Belongs to the universal ribosomal protein uL11 family. As to quaternary structure, part of the ribosomal stalk of the 50S ribosomal subunit. Interacts with L10 and the large rRNA to form the base of the stalk. L10 forms an elongated spine to which L12 dimers bind in a sequential fashion forming a multimeric L10(L12)X complex. Post-translationally, one or more lysine residues are methylated.

Forms part of the ribosomal stalk which helps the ribosome interact with GTP-bound translation factors. The chain is Large ribosomal subunit protein uL11 from Pseudomonas fluorescens (strain Pf0-1).